We begin with the raw amino-acid sequence, 322 residues long: Chromoplast-specific carotenoid-associated protein, chromoplastic (322 aa).

A chromoplast-targeting transit peptide spans 1–58; the sequence is MAFVSQFNQLPCKTLALNPPQPQLTSKPSVFPIASIGATARAAAGKSLISVRPAFKVR. Residues 67–88 form a disordered region; that stretch reads GEDKDEKYGDDSSVAVAEKEEE.

It belongs to the PAP/fibrillin family. Expressed in corollas. Not detected in fruits, stems, leaves, and roots.

It is found in the plastid. The protein resides in the chromoplast. May be involved in carotenoid sequestration within chromoplasts. The polypeptide is Chromoplast-specific carotenoid-associated protein, chromoplastic (CHRC) (Cucumis sativus (Cucumber)).